A 77-amino-acid chain; its full sequence is Conotoxin ArMKLT2-022 (77 aa).

An N-terminal signal peptide occupies residues 1–22 (MKLTCVLIVAVLFLTACQLIAA). Residues 23–46 (DDSRDLKRFSRRKMRDGMLNTKNT) constitute a propeptide that is removed on maturation. A Pyrrolidone carboxylic acid modification is found at Gln-49. Intrachain disulfides connect Cys-50/Cys-65, Cys-57/Cys-68, and Cys-64/Cys-73.

Belongs to the conotoxin O1 superfamily. In terms of tissue distribution, expressed by the venom duct.

It is found in the secreted. The sequence is that of Conotoxin ArMKLT2-022 from Conus arenatus (Sand-dusted cone).